The chain runs to 181 residues: CDP-archaeol synthase (181 aa).

A run of 5 helical transmembrane segments spans residues 7–27, 55–75, 88–108, 126–146, and 147–167; these read VVWALWAMLPAYIPNNAAVLA, LIGTAAGTALALGLTQVTPSV, LRAGLGLAFGAMLGDIGASFL, LDFVVGALLCAFVAAPSWFTE, and TFTLPVLVVVVVATPVLHVVT.

It belongs to the CDP-archaeol synthase family. Requires Mg(2+) as cofactor.

It is found in the cell membrane. The catalysed reaction is 2,3-bis-O-(geranylgeranyl)-sn-glycerol 1-phosphate + CTP + H(+) = CDP-2,3-bis-O-(geranylgeranyl)-sn-glycerol + diphosphate. It participates in membrane lipid metabolism; glycerophospholipid metabolism. In terms of biological role, catalyzes the formation of CDP-2,3-bis-(O-geranylgeranyl)-sn-glycerol (CDP-archaeol) from 2,3-bis-(O-geranylgeranyl)-sn-glycerol 1-phosphate (DGGGP) and CTP. This reaction is the third ether-bond-formation step in the biosynthesis of archaeal membrane lipids. In Haloarcula marismortui (strain ATCC 43049 / DSM 3752 / JCM 8966 / VKM B-1809) (Halobacterium marismortui), this protein is CDP-archaeol synthase.